Consider the following 105-residue polypeptide: ATP synthase subunit c (105 aa).

Helical transmembrane passes span 3–23, 32–52, and 78–98; these read FLAL…GGMG, SILG…IGMG, and VAMA…IIAI.

The protein belongs to the ATPase C chain family. F-type ATPases have 2 components, F(1) - the catalytic core - and F(0) - the membrane proton channel. F(1) has five subunits: alpha(3), beta(3), gamma(1), delta(1), epsilon(1). F(0) has three main subunits: a(1), b(2) and c(10-14). The alpha and beta chains form an alternating ring which encloses part of the gamma chain. F(1) is attached to F(0) by a central stalk formed by the gamma and epsilon chains, while a peripheral stalk is formed by the delta and b chains.

It is found in the cell inner membrane. F(1)F(0) ATP synthase produces ATP from ADP in the presence of a proton or sodium gradient. F-type ATPases consist of two structural domains, F(1) containing the extramembraneous catalytic core and F(0) containing the membrane proton channel, linked together by a central stalk and a peripheral stalk. During catalysis, ATP synthesis in the catalytic domain of F(1) is coupled via a rotary mechanism of the central stalk subunits to proton translocation. Functionally, key component of the F(0) channel; it plays a direct role in translocation across the membrane. A homomeric c-ring of between 10-14 subunits forms the central stalk rotor element with the F(1) delta and epsilon subunits. In Helicobacter pylori (strain P12), this protein is ATP synthase subunit c.